A 372-amino-acid chain; its full sequence is Protein phosphatase Mn(2+)-dependent 1K (372 aa).

The transit peptide at 1-29 directs the protein to the mitochondrion; the sequence is MSTAALITLVRSGGNQVRRRVLLSSRLLQ. The interval 34–55 is disordered; it reads VTPTCHSSTSEPRCSRFDPDGS. A critical for association with the BCKDH complex region spans residues 46–61; that stretch reads RCSRFDPDGSGSPATW. The 253-residue stretch at 94 to 346 folds into the PPM-type phosphatase domain; the sequence is NVGCASQIGK…DNSTAVVVPF (253 aa). Residues Asp-127 and Gly-128 each coordinate Mn(2+). Ser-248 is modified (phosphoserine). Mn(2+) is bound by residues Asp-298 and Asp-337.

The protein belongs to the PP2C family. Monomer. Interacts with E1 and E2 components of the branched-chain alpha-ketoacid dehydrogenase (BCKDH) complex; this interaction requires colocalization in mitochondria. Interacts with BCKDHA but not with BCKDHB of the E1 component. Interacts with the 24-meric E2 core composed of DBT monomers with a 24:1 stoichiometry; the N-terminal region (residues 49-61) of PPM1K and C-terminal linker of the lipoyl domain of DBT (residues 145-160) are critical for this interaction, whereas the lipoyl prosthetic group is dispensable. Competes with BCKDK for binding to the E2 core; this interaction is modulated by branched-chain alpha-keto acids. At steady state, BCKDH holoenzyme preferentially binds BCKDK and BCKDHA is phosphorylated. In response to high levels of branched-chain alpha-keto acids, the inhibitory BCKDK is replaced by activating PPM1K leading to BCKDHA dephosphorylation and BCAA degradation. It depends on Mn(2+) as a cofactor.

Its subcellular location is the mitochondrion matrix. The enzyme catalyses O-phospho-L-seryl-[3-methyl-2-oxobutanoate dehydrogenase] + H2O = L-seryl-[3-methyl-2-oxobutanoate dehydrogenase] + phosphate. It carries out the reaction O-phospho-L-seryl-[protein] + H2O = L-seryl-[protein] + phosphate. It functions in the pathway protein modification. Up-regulated upon interaction with the 24-meric DBT/E2 core of the BCKDH complex. Inhibited by Mg(2+) and Ca(2+) ions likely by competing with Mn(2+) ions for binding to the same metal-binding sites. Its function is as follows. Serine/threonine-protein phosphatase component of macronutrients metabolism. Forms a functional kinase and phosphatase pair with BCKDK, serving as a metabolic regulatory node that coordinates branched-chain amino acids (BCAAs) with glucose and lipid metabolism via two distinct phosphoprotein targets: mitochondrial BCKDHA subunit of the branched-chain alpha-ketoacid dehydrogenase (BCKDH) complex and cytosolic ACLY, a lipogenic enzyme of Krebs cycle. At high levels of branched-chain ketoacids, dephosphorylates and activates mitochondrial BCKDH complex, a multisubunit complex consisting of three multimeric components each involved in different steps of BCAA catabolism: E1 composed of BCKDHA and BCKDHB, E2 core composed of DBT monomers, and E3 composed of DLD monomers. Tightly associates with the E2 component of BCKDH complex and dephosphorylates BCKDHA on Ser-337. Regulates the reversible phosphorylation of ACLY in response to changes in cellular carbohydrate abundance such as occurs during fasting to feeding metabolic transition. At fasting state, appears to dephosphorylate ACLY on Ser-455 and inactivate it. Refeeding stimulates MLXIPL/ChREBP transcription factor, leading to increased BCKDK to PPM1K expression ratio, phosphorylation and activation of ACLY that ultimately results in the generation of malonyl-CoA and oxaloacetate immediate substrates of de novo lipogenesis and gluconeogenesis, respectively. Recognizes phosphosites having SxS or RxxS motifs and strictly depends on Mn(2+) ions for the phosphatase activity. Regulates Ca(2+)-induced opening of mitochondrial transition pore and apoptotic cell death. The polypeptide is Protein phosphatase Mn(2+)-dependent 1K (Homo sapiens (Human)).